The sequence spans 107 residues: Late histone H2B.L4 (107 aa).

O-linked (GlcNAc) serine glycosylation occurs at S94. K102 participates in a covalent cross-link: Glycyl lysine isopeptide (Lys-Gly) (interchain with G-Cter in ubiquitin).

The protein belongs to the histone H2B family. The nucleosome is a histone octamer containing two molecules each of H2A, H2B, H3 and H4 assembled in one H3-H4 heterotetramer and two H2A-H2B heterodimers. The octamer wraps approximately 147 bp of DNA. In terms of processing, monoubiquitination gives a specific tag for epigenetic transcriptional activation and is also prerequisite for histone H3 'Lys-4' and 'Lys-79' methylation. Post-translationally, glcNAcylation at Ser-94 promotes monoubiquitination of Lys-102. It fluctuates in response to extracellular glucose, and associates with transcribed genes.

It localises to the nucleus. The protein localises to the chromosome. Core component of nucleosome. Nucleosomes wrap and compact DNA into chromatin, limiting DNA accessibility to the cellular machineries which require DNA as a template. Histones thereby play a central role in transcription regulation, DNA repair, DNA replication and chromosomal stability. DNA accessibility is regulated via a complex set of post-translational modifications of histones, also called histone code, and nucleosome remodeling. This Strongylocentrotus purpuratus (Purple sea urchin) protein is Late histone H2B.L4.